A 367-amino-acid polypeptide reads, in one-letter code: MTPNILPIESYDHQLAEKSARLKAMMLPFQAPEPEIFRSPADHYRMRAEFRVWHDEDDLYHIMFDQQTKQRIRVEQFPVASRLINRLMDALMTAIRAEPLLRRKLFQIDYLSTLSGKLIASLLYHRQLDEEWQQKALELRDQLRAQGFDLQLIGRAAKTKIMLDHDYIDEVLPVAGREMIYRQVENSFTQPNAAVNIHMLEWALDVTQGATGDLLELYCGNGNFSLALARNFERVLATEIAKPSVAAAQYNIAANNIDNVQIIRMSAEEFTQAMQGVREFNRLKGIDLGSYNCETIFVDPPRSGLDHETVKLVQAYPRILYISCNPETLCANLEQLQHTHKISRLALFDQFPYTHHMECGVLLEKRH.

Residues Gln-190, Tyr-218, Asn-223, Glu-239, and Asp-299 each coordinate S-adenosyl-L-methionine. Catalysis depends on Cys-324, which acts as the Nucleophile. Glu-358 acts as the Proton acceptor in catalysis.

This sequence belongs to the class I-like SAM-binding methyltransferase superfamily. RNA M5U methyltransferase family. TrmA subfamily.

The enzyme catalyses uridine(54) in tRNA + S-adenosyl-L-methionine = 5-methyluridine(54) in tRNA + S-adenosyl-L-homocysteine + H(+). The catalysed reaction is uridine(341) in tmRNA + S-adenosyl-L-methionine = 5-methyluridine(341) in tmRNA + S-adenosyl-L-homocysteine + H(+). In terms of biological role, dual-specificity methyltransferase that catalyzes the formation of 5-methyluridine at position 54 (m5U54) in all tRNAs, and that of position 341 (m5U341) in tmRNA (transfer-mRNA). The protein is tRNA/tmRNA (uracil-C(5))-methyltransferase of Yersinia pestis bv. Antiqua (strain Antiqua).